We begin with the raw amino-acid sequence, 154 residues long: Myoglobin (154 aa).

The 147-residue stretch at 2 to 148 (GLSDQEWQQV…FRNDMASKYK (147 aa)) folds into the Globin domain. H65 contributes to the nitrite binding site. H65 is an O2 binding site. H94 contributes to the heme b binding site.

In terms of assembly, monomeric.

The protein resides in the cytoplasm. It is found in the sarcoplasm. It catalyses the reaction Fe(III)-heme b-[protein] + nitric oxide + H2O = Fe(II)-heme b-[protein] + nitrite + 2 H(+). The enzyme catalyses H2O2 + AH2 = A + 2 H2O. In terms of biological role, monomeric heme protein which primary function is to store oxygen and facilitate its diffusion within muscle tissues. Reversibly binds oxygen through a pentacoordinated heme iron and enables its timely and efficient release as needed during periods of heightened demand. Depending on the oxidative conditions of tissues and cells, and in addition to its ability to bind oxygen, it also has a nitrite reductase activity whereby it regulates the production of bioactive nitric oxide. Under stress conditions, like hypoxia and anoxia, it also protects cells against reactive oxygen species thanks to its pseudoperoxidase activity. This chain is Myoglobin (MB), found in Struthio camelus (Common ostrich).